The chain runs to 99 residues: UPF0235 protein ASA_3628 (99 aa).

This sequence belongs to the UPF0235 family.

The polypeptide is UPF0235 protein ASA_3628 (Aeromonas salmonicida (strain A449)).